A 1030-amino-acid polypeptide reads, in one-letter code: MMAVASPPPEPEDLLIVKLEEDSWGSDSRPEKESHSPVPGPEVSRRCFRQFRYRDAAGPHEAFSQLWALCCRWLRPELRLKEQILELLVLEQFLSILPREVQTWVQARHPESGEEAVALVEDWHREAWAAGQQGLELCSEDSRSFEAVQEFQRFQLQPVTHGSEGQPRKQWVENARPDLSKMPPESLKESAVLTPQAPTVPKMASIGDWEVAGKSQETPSPSRQAKKEPCQDPAGGDRGDSACLGVPASKPSATSQQEQGPEIWGLSLINSGNGSAADDSLDSAQDKPVQAVAQADSRAWGEPCQWGAEDMKVSGVHWGYEETKTFLAILSESPFSEKLQTCHQNRQVYRAIAERLRARGFLRTLEQCRYRVKNLLRNYRKAKNSHPPGTCPFYEELEALVRARTAIRRTSGGPGEAVALPRLGDSDTEMDDQDEGSWEPEETVEDCSGSGLAAEESLQGPRIAGGPALLQSRIAGVHWGFEETKVFLAILSESPFAEKLRTCHQNSQIYRAIAERLRALGFLRTLEQCRYRFKNLLRSYRKAKSSCPPGTCPFYEEMDSLMRARTVIRAVEMVGEATGLPGSGQSSTEADDQEAWGEMEDEDAVRLLTPDSQPADAGFELKREEEDQISEQDVLGDLPGALSRYTTKAVCQPCDWGEDHVNGNEGEWRNTWEECSSEEDLEKLIDHQGLYLTEKPYGCDTRAKSFSRKVHFFAPQRTHSSEKPYKCLGSGKSFSDRANLSTHQRIHIGEKPYRCLECGKSFNDPSNLITHQRTHTGEKPYKCGLCWKSFNQSSNLLKHQRVHLGGPPNQRDEPGENFGQSLSYSAHWRRNSTQEGPKEPQNISMGADSPGACHPNSGEKLYSCPECGRCFSKSSALTSHQRIHSGEKPYECAVCGKSFSKSSSLANHRRTHTGEKPHKCADCGKCFSERSKLITHQRVHTGEKPYECPECGKFFRDRSNLITHQRIHTGEKPYKCRECGKCFNQSSSLIIHQRIHTGEKPYKCTECGKDFNNSSHFSAHRRTHAGGKAL.

A disordered region spans residues 22 to 42 (DSWGSDSRPEKESHSPVPGPE). An SCAN box domain is found at 45–127 (RRCFRQFRYR…ALVEDWHREA (83 aa)). Disordered regions lie at residues 178 to 201 (DLSKMPPESLKESAVLTPQAPTVP), 213 to 285 (GKSQ…DSAQ), 411 to 441 (SGGPGEAVALPRLGDSDTEMDDQDEGSWEPE), and 578 to 600 (TGLPGSGQSSTEADDQEAWGEME). A compositionally biased stretch (basic and acidic residues) spans 225–240 (AKKEPCQDPAGGDRGD). 2 stretches are compositionally biased toward acidic residues: residues 426 to 441 (SDTEMDDQDEGSWEPE) and 589 to 600 (EADDQEAWGEME). The C2H2-type 1; degenerate zinc-finger motif lies at 697–719 (YGCDTRAKSFSRKVHFFAPQRTH). Residues 725–747 (YKCLGSGKSFSDRANLSTHQRIH) form a C2H2-type 2; degenerate zinc finger. C2H2-type zinc fingers lie at residues 753-775 (YRCLECGKSFNDPSNLITHQRTH) and 781-803 (YKCGLCWKSFNQSSNLLKHQRVH). Disordered regions lie at residues 801 to 820 (RVHLGGPPNQRDEPGENFGQ) and 828 to 850 (WRRNSTQEGPKEPQNISMGADSP). C2H2-type zinc fingers lie at residues 862–884 (YSCPECGRCFSKSSALTSHQRIH), 890–912 (YECAVCGKSFSKSSSLANHRRTH), 918–940 (HKCADCGKCFSERSKLITHQRVH), 946–968 (YECPECGKFFRDRSNLITHQRIH), 974–996 (YKCRECGKCFNQSSSLIIHQRIH), and 1002–1024 (YKCTECGKDFNNSSHFSAHRRTH).

This sequence belongs to the krueppel C2H2-type zinc-finger protein family.

Its subcellular location is the nucleus. May be involved in transcriptional regulation. The sequence is that of Zinc finger and SCAN domain-containing protein 20 (Zscan20) from Mus musculus (Mouse).